A 317-amino-acid polypeptide reads, in one-letter code: Putative HTH-type transcriptional regulatory protein TGAM_1316 (317 aa).

Residues 131-189 (LKKLREKHGYSVGELASLLGVSRKSLLNYERNEQAVSLEVALRMEELFDEPIAEPIDVL) enclose the HTH cro/C1-type domain. Positions 142 to 161 (VGELASLLGVSRKSLLNYER) form a DNA-binding region, H-T-H motif.

The chain is Putative HTH-type transcriptional regulatory protein TGAM_1316 from Thermococcus gammatolerans (strain DSM 15229 / JCM 11827 / EJ3).